The primary structure comprises 345 residues: UDP-3-O-acylglucosamine N-acyltransferase (345 aa).

His-248 serves as the catalytic Proton acceptor.

The protein belongs to the transferase hexapeptide repeat family. LpxD subfamily. In terms of assembly, homotrimer.

The enzyme catalyses a UDP-3-O-[(3R)-3-hydroxyacyl]-alpha-D-glucosamine + a (3R)-hydroxyacyl-[ACP] = a UDP-2-N,3-O-bis[(3R)-3-hydroxyacyl]-alpha-D-glucosamine + holo-[ACP] + H(+). It participates in bacterial outer membrane biogenesis; LPS lipid A biosynthesis. Catalyzes the N-acylation of UDP-3-O-acylglucosamine using 3-hydroxyacyl-ACP as the acyl donor. Is involved in the biosynthesis of lipid A, a phosphorylated glycolipid that anchors the lipopolysaccharide to the outer membrane of the cell. The protein is UDP-3-O-acylglucosamine N-acyltransferase of Trichodesmium erythraeum (strain IMS101).